A 420-amino-acid polypeptide reads, in one-letter code: Serine--tRNA ligase (420 aa).

Position 225 to 227 (225 to 227) interacts with L-serine; the sequence is TLE. 256 to 258 provides a ligand contact to ATP; sequence RQE. Residue Glu-279 coordinates L-serine. 343–346 contacts ATP; the sequence is EVSS. L-serine is bound at residue Thr-379.

This sequence belongs to the class-II aminoacyl-tRNA synthetase family. Type-1 seryl-tRNA synthetase subfamily. Homodimer. The tRNA molecule binds across the dimer.

The protein resides in the cytoplasm. It catalyses the reaction tRNA(Ser) + L-serine + ATP = L-seryl-tRNA(Ser) + AMP + diphosphate + H(+). It carries out the reaction tRNA(Sec) + L-serine + ATP = L-seryl-tRNA(Sec) + AMP + diphosphate + H(+). It functions in the pathway aminoacyl-tRNA biosynthesis; selenocysteinyl-tRNA(Sec) biosynthesis; L-seryl-tRNA(Sec) from L-serine and tRNA(Sec): step 1/1. Catalyzes the attachment of serine to tRNA(Ser). Is also able to aminoacylate tRNA(Sec) with serine, to form the misacylated tRNA L-seryl-tRNA(Sec), which will be further converted into selenocysteinyl-tRNA(Sec). This Mycoplasma pneumoniae (strain ATCC 29342 / M129 / Subtype 1) (Mycoplasmoides pneumoniae) protein is Serine--tRNA ligase.